The following is a 365-amino-acid chain: tRNA(Met) cytidine acetate ligase (365 aa).

ATP is bound by residues 7-20 (IAEF…HKYL), glycine 96, asparagine 152, and arginine 175.

Belongs to the TmcAL family.

The protein resides in the cytoplasm. The catalysed reaction is cytidine(34) in elongator tRNA(Met) + acetate + ATP = N(4)-acetylcytidine(34) in elongator tRNA(Met) + AMP + diphosphate. Functionally, catalyzes the formation of N(4)-acetylcytidine (ac(4)C) at the wobble position of elongator tRNA(Met), using acetate and ATP as substrates. First activates an acetate ion to form acetyladenylate (Ac-AMP) and then transfers the acetyl group to tRNA to form ac(4)C34. This is tRNA(Met) cytidine acetate ligase from Streptococcus pneumoniae (strain Hungary19A-6).